The following is a 318-amino-acid chain: Cell growth regulator with EF hand domain protein 1 (318 aa).

An N-terminal signal peptide occupies residues 1–19 (MLPLTMTVLILLLLPTGQA). 2 EF-hand domains span residues 69-104 (SREQ…ALAP) and 114-149 (PVIL…ALRH). Ca(2+)-binding residues include aspartate 82, aspartate 84, serine 86, glutamine 88, glutamate 93, aspartate 127, asparagine 129, aspartate 131, and glutamate 138. Positions 177–318 (LRQETQEAPG…HIVQVENDEI (142 aa)) are disordered. Composition is skewed to basic and acidic residues over residues 186–202 (GPRE…RESL) and 223–233 (GEAEGQAEAKG). Tandem repeats lie at residues 219–235 (PGPR…KGDA), 236–252 (PGPR…EGDA), and 253–269 (PGPR…EGDA). The tract at residues 219 to 286 (PGPRGEAEGQ…GGQAEARENG (68 aa)) is 4 X 17 AA approximate tandem repeats of P-G-P-R-G-E-A-G-G-Q-A-E-A-[KR]-G-D-A. Low complexity predominate over residues 235–272 (APGPRGEAGGQAEAEGDAPGPRGEAGGQAEAEGDAPGP). One copy of the 4; approximate repeat lies at 270–286 (PGPRGEAGGQAEARENG). Basic and acidic residues predominate over residues 281–293 (EARENGEEAKELP).

In terms of processing, probably digested extracellularly by an unknown serine protease generating extremely hydrophobic bioactive peptides.

The protein localises to the secreted. Mediates cell-cell adhesion in a calcium-dependent manner. Able to inhibit growth in several cell lines. The sequence is that of Cell growth regulator with EF hand domain protein 1 from Homo sapiens (Human).